The chain runs to 325 residues: Probable cell division protein WhiA (325 aa).

Positions 273 to 306 (SLEELGALADPPLTKDAVAGRIRRLLALADKRAN) form a DNA-binding region, H-T-H motif.

Belongs to the WhiA family.

Its function is as follows. Involved in cell division and chromosome segregation. The polypeptide is Probable cell division protein WhiA (Parafrankia sp. (strain EAN1pec)).